A 503-amino-acid chain; its full sequence is Protein ERGIC-53-like (503 aa).

The N-terminal stretch at 1 to 25 (MLKTGGLSPSLCLLSLLLALHSAER) is a signal peptide. Topologically, residues 26-439 (SYPPPQRRFE…WLPGFSTCLR (414 aa)) are lumenal. One can recognise an L-type lectin-like domain in the interval 32 to 253 (RRFEYKLSFK…DVLSFLTFSL (222 aa)). Residues C177 and C216 are joined by a disulfide bond. The chain crosses the membrane as a helical span at residues 440 to 460 (TSIFLFFLLIQTVGFFCYMNF). The Cytoplasmic portion of the chain corresponds to 461 to 503 (RQELDKRLQEYLFTESISLQPALPIPRTIGVLRRQPVSPSMQA).

As to expression, predominantly expressed in the sublingual salivary gland, in the mucous cells of the acini, but not in the serous cells, nor in the duct system (at protein level). Not detected in the submandilar, nor the parotid glands. Expressed in the mucous glands, but not detected in the serous glands (at protein level). Besides the salivary glands, expressed in the Brunner's glands in the duodenum, but no other mucous or serous glands (at protein level).

It is found in the endoplasmic reticulum-Golgi intermediate compartment membrane. This chain is Protein ERGIC-53-like (Lman1l), found in Rattus norvegicus (Rat).